We begin with the raw amino-acid sequence, 237 residues long: Orotidine 5'-phosphate decarboxylase (237 aa).

Substrate-binding positions include D10, K33, 60-69, T124, R186, Q195, G215, and R216; that span reads DLKLHDIPNT. K62 acts as the Proton donor in catalysis.

This sequence belongs to the OMP decarboxylase family. Type 1 subfamily. Homodimer.

The catalysed reaction is orotidine 5'-phosphate + H(+) = UMP + CO2. The protein operates within pyrimidine metabolism; UMP biosynthesis via de novo pathway; UMP from orotate: step 2/2. Functionally, catalyzes the decarboxylation of orotidine 5'-monophosphate (OMP) to uridine 5'-monophosphate (UMP). The polypeptide is Orotidine 5'-phosphate decarboxylase (Lactiplantibacillus plantarum (strain ATCC BAA-793 / NCIMB 8826 / WCFS1) (Lactobacillus plantarum)).